Reading from the N-terminus, the 427-residue chain is Homoserine O-acetyltransferase FUB5 (427 aa).

Residues 1-13 (MTTTTTAPALPTP) are compositionally biased toward low complexity. The segment at 1–35 (MTTTTTAPALPTPIHDGLGNGTTYERSIPRPVNPF) is disordered. One can recognise an AB hydrolase-1 domain in the interval 77-400 (NVMIICHALS…VSDDGHDAFL (324 aa)). Residue serine 175 is the Nucleophile of the active site. The tract at residues 260–297 (RFGRDTGNKKKAKNKGSETLPSNSTPIHSQGGADETPV) is disordered. Polar residues predominate over residues 276 to 287 (SETLPSNSTPIH). Residues aspartate 367 and histidine 396 contribute to the active site.

Belongs to the AB hydrolase superfamily. MetX family.

The enzyme catalyses L-homoserine + acetyl-CoA = O-acetyl-L-homoserine + CoA. It participates in mycotoxin biosynthesis. Functionally, homoserine O-acetyltransferase; part of the gene cluster that mediates the biosynthesis of fusaric acid, a mycotoxin with low to moderate toxicity to animals and humans, but with high phytotoxic properties. L-aspartate is suggested as fusaric acid amino acid precursor that is activated and further processed to O-acetyl-L-homoserine by cluster enzymes aspartate kinase FUB3 and homoserine O-acetyltransferase FUB5, as well as enzymes of the primary metabolism. The polyketide synthase (PKS) FUB1 generates the triketide trans-2-hexenal which is presumptively released by the hydrolase FUB4 and linked to the NRPS-bound amino acid precursor by NAD(P)-dependent dehydrogenase FUB6. FUB1, FUB4, and the non-canonical NRPS Fub8 may form an enzyme complex. Further processing of the NRPS-bound intermediate might be carried out by FUB6 and the sulfhydrylase FUB7, enabling a spontaneous electrocyclization to close the carbon backbone of fusaric acid. Dihydrofusaric acid is likely to be released via reduction by the thioester reductase (TR) domain of FUB8 whereupon the final oxidation to fusaric acid may (also) be performed by the FMN-dependent dehydrogenase FUB9. The chain is Homoserine O-acetyltransferase FUB5 from Gibberella fujikuroi (strain CBS 195.34 / IMI 58289 / NRRL A-6831) (Bakanae and foot rot disease fungus).